We begin with the raw amino-acid sequence, 94 residues long: Fungal defensin scedosporisin-2 (94 aa).

Residues 1-25 form the signal peptide; sequence MKFSNISIAALFTILASTAMAAPAA. Residues 26 to 56 constitute a propeptide that is removed on maturation; sequence DSPDSIVAREPAPVEETYEAPSGLEKRGFGC. Residues Phe54, Gly55, and Cys56 each contribute to the beta-D-GlcNAc-(1-&gt;4)-Mur2Ac(oyl-L-Ala-gamma-D-Glu-L-Lys-D-Ala-D-Ala)-di-trans,octa-cis-undecaprenyl diphosphate site. 3 cysteine pairs are disulfide-bonded: Cys56–Cys78, Cys63–Cys91, and Cys67–Cys93. The segment at 57 to 60 is interaction site with membrane interface; sequence PGSE. His66 contributes to the beta-D-GlcNAc-(1-&gt;4)-Mur2Ac(oyl-L-Ala-gamma-D-Glu-L-Lys-D-Ala-D-Ala)-di-trans,octa-cis-undecaprenyl diphosphate binding site. Residues 83-90 are interaction site with membrane interface; sequence IPFVGRPR. Cys91 serves as a coordination point for beta-D-GlcNAc-(1-&gt;4)-Mur2Ac(oyl-L-Ala-gamma-D-Glu-L-Lys-D-Ala-D-Ala)-di-trans,octa-cis-undecaprenyl diphosphate.

This sequence belongs to the invertebrate defensin family.

It localises to the secreted. The protein localises to the target cell membrane. Antibacterial peptide potently active against Gram-positive bacteria. May act by selectively inhibiting peptidoglycan biosynthesis through complex formation with the cell wall precursor lipid II (1:1 molar ratio) thus inhibiting cell wall synthesis. Shows remarkably activity against resistant isolates such as methicillin-resistant Staphylococcus aureus (MRSA) and vancomycin-resistant Enterococci (VRE) at the concentration of micromolar level. Does not act by destroying the membrane integrity, which is consistent with its nonamphiphilic architecture. Acts more rapidly than vancomycin. Shows low hemolysis and cytotoxicity and high serum stability. In vivo, is as efficient as vancomycin to protect mouse peritonitis models from MRSA infections. In Pseudallescheria apiosperma (Scedosporium apiospermum), this protein is Fungal defensin scedosporisin-2.